A 295-amino-acid chain; its full sequence is Ectoine dioxygenase (295 aa).

An L-ectoine-binding site is contributed by glutamine 129. Lysine 135 provides a ligand contact to 2-oxoglutarate. Histidine 146, aspartate 148, and histidine 247 together coordinate Fe cation.

The protein belongs to the PhyH family. EctD subfamily. Homodimer. Fe(2+) is required as a cofactor.

It carries out the reaction L-ectoine + 2-oxoglutarate + O2 = 5-hydroxyectoine + succinate + CO2. In terms of biological role, involved in the biosynthesis of 5-hydroxyectoine, called compatible solute, which helps organisms to survive extreme osmotic stress by acting as a highly soluble organic osmolyte. Catalyzes the 2-oxoglutarate-dependent selective hydroxylation of L-ectoine to yield (4S,5S)-5-hydroxyectoine. This chain is Ectoine dioxygenase, found in Streptomyces avermitilis (strain ATCC 31267 / DSM 46492 / JCM 5070 / NBRC 14893 / NCIMB 12804 / NRRL 8165 / MA-4680).